Here is a 465-residue protein sequence, read N- to C-terminus: Probable Xaa-Pro aminopeptidase pepP (465 aa).

Mn(2+)-binding residues include D263, D274, E397, and E437.

This sequence belongs to the peptidase M24B family. It depends on Mn(2+) as a cofactor.

It carries out the reaction Release of any N-terminal amino acid, including proline, that is linked to proline, even from a dipeptide or tripeptide.. Its function is as follows. Catalyzes the removal of a penultimate prolyl residue from the N-termini of peptides. The protein is Probable Xaa-Pro aminopeptidase pepP (pepP) of Emericella nidulans (strain FGSC A4 / ATCC 38163 / CBS 112.46 / NRRL 194 / M139) (Aspergillus nidulans).